The following is a 161-amino-acid chain: Nucleoside diphosphate kinase (161 aa).

ATP contacts are provided by lysine 12, phenylalanine 60, arginine 88, threonine 94, and arginine 105. Histidine 121 (pros-phosphohistidine intermediate) is an active-site residue.

It belongs to the NDK family. Mg(2+) is required as a cofactor.

The protein localises to the cytoplasm. The enzyme catalyses a 2'-deoxyribonucleoside 5'-diphosphate + ATP = a 2'-deoxyribonucleoside 5'-triphosphate + ADP. The catalysed reaction is a ribonucleoside 5'-diphosphate + ATP = a ribonucleoside 5'-triphosphate + ADP. Major role in the synthesis of nucleoside triphosphates other than ATP. The ATP gamma phosphate is transferred to the NDP beta phosphate via a ping-pong mechanism, using a phosphorylated active-site intermediate. In Pyrococcus furiosus (strain ATCC 43587 / DSM 3638 / JCM 8422 / Vc1), this protein is Nucleoside diphosphate kinase.